Reading from the N-terminus, the 335-residue chain is Phosphoserine phosphatase RsbU (335 aa).

A PPM-type phosphatase domain is found at Asp-123–Arg-333.

It catalyses the reaction O-phospho-L-serine + H2O = L-serine + phosphate. The enzyme catalyses O-phospho-D-serine + H2O = D-serine + phosphate. Its activity is regulated as follows. Stimulated by a long-lived interaction with RsbT. In terms of biological role, positive regulator of sigma-B activity. Dephosphorylates RsbV in response to environmental stress conveyed from the RsbXST module. This chain is Phosphoserine phosphatase RsbU (rsbU), found in Bacillus subtilis (strain 168).